Here is a 357-residue protein sequence, read N- to C-terminus: Phenylalanine--tRNA ligase alpha subunit (357 aa).

Glu-257 is a binding site for Mg(2+).

It belongs to the class-II aminoacyl-tRNA synthetase family. Phe-tRNA synthetase alpha subunit type 1 subfamily. Tetramer of two alpha and two beta subunits. Mg(2+) is required as a cofactor.

The protein resides in the cytoplasm. The catalysed reaction is tRNA(Phe) + L-phenylalanine + ATP = L-phenylalanyl-tRNA(Phe) + AMP + diphosphate + H(+). The chain is Phenylalanine--tRNA ligase alpha subunit from Ruegeria pomeroyi (strain ATCC 700808 / DSM 15171 / DSS-3) (Silicibacter pomeroyi).